Reading from the N-terminus, the 893-residue chain is Beta-adaptin-like protein C (893 aa).

Positions 593 to 621 are disordered; the sequence is TEDEDYVEGSETGYPEASGNPVDGAASPS.

This sequence belongs to the adaptor complexes large subunit family. Adaptor protein complexes are heterotetramers composed of two large adaptins (beta-type subunit and alpha-type or delta-type or epsilon-type or gamma-type subunit), a medium adaptin (mu-type subunit) and a small adaptin (sigma-type subunit).

It localises to the golgi apparatus. The protein resides in the trans-Golgi network. The protein localises to the cytoplasmic vesicle. It is found in the clathrin-coated vesicle membrane. In terms of biological role, subunit of clathrin-associated adaptor protein complex that plays a role in protein sorting in the late-Golgi/trans-Golgi network (TGN) and/or endosomes. The AP complexes mediate both the recruitment of clathrin to membranes and the recognition of sorting signals within the cytosolic tails of transmembrane cargo molecules. The chain is Beta-adaptin-like protein C (BETAC-AD) from Arabidopsis thaliana (Mouse-ear cress).